The sequence spans 451 residues: Phosphoglucosamine mutase (451 aa).

Ser102 acts as the Phosphoserine intermediate in catalysis. 4 residues coordinate Mg(2+): Ser102, Asp243, Asp245, and Asp247. Position 102 is a phosphoserine (Ser102).

The protein belongs to the phosphohexose mutase family. The cofactor is Mg(2+). In terms of processing, activated by phosphorylation.

The enzyme catalyses alpha-D-glucosamine 1-phosphate = D-glucosamine 6-phosphate. Catalyzes the conversion of glucosamine-6-phosphate to glucosamine-1-phosphate. The sequence is that of Phosphoglucosamine mutase from Sinorhizobium medicae (strain WSM419) (Ensifer medicae).